Reading from the N-terminus, the 75-residue chain is Cytoplasmic envelopment protein 3 (75 aa).

Gly-2 carries N-myristoyl glycine; by host lipidation. The span at 53–65 (EGLEYDEDSENDE) shows a compositional bias: acidic residues. The interval 53–75 (EGLEYDEDSENDELLFLPNKKPN) is disordered.

Belongs to the herpesviridae cytoplasmic envelopment protein 3 family. As to quaternary structure, interacts with BGLF2; this interaction is essential for the proper localization of each protein to the assembly complex and thus for the production of infectious virus. Post-translationally, myristoylation and palmitoylation (probably on one or more of the nearby cysteines at the N-terminus) enable membrane-binding and Golgi apparatus-specific targeting and are essential for efficient packaging. Phosphorylated. Phosphorylation does not seem to be required for recycling to the host Golgi apparatus. Packaging is selective for underphosphorylated forms.

It localises to the virion tegument. Its subcellular location is the virion membrane. The protein resides in the host cell membrane. It is found in the host Golgi apparatus membrane. Its function is as follows. Plays an important role in the cytoplasmic envelopment of tegument proteins and capsids during the assembly and egress processes. Also participates in viral entry at the fusion step probably by regulating the core fusion machinery. The chain is Cytoplasmic envelopment protein 3 from Homo sapiens (Human).